Consider the following 654-residue polypeptide: Fructose-1,6-bisphosphatase class 3 (654 aa).

Positions N288–E307 are disordered. The segment covering D298–E307 has biased composition (basic and acidic residues).

It belongs to the FBPase class 3 family. Mn(2+) serves as cofactor.

It catalyses the reaction beta-D-fructose 1,6-bisphosphate + H2O = beta-D-fructose 6-phosphate + phosphate. It functions in the pathway carbohydrate biosynthesis; gluconeogenesis. The polypeptide is Fructose-1,6-bisphosphatase class 3 (Staphylococcus aureus (strain MSSA476)).